We begin with the raw amino-acid sequence, 232 residues long: tRNA (guanine-N(1)-)-methyltransferase (232 aa).

S-adenosyl-L-methionine contacts are provided by residues Gly111 and 131 to 136 (IGDYIL).

The protein belongs to the RNA methyltransferase TrmD family. Homodimer.

The protein resides in the cytoplasm. The catalysed reaction is guanosine(37) in tRNA + S-adenosyl-L-methionine = N(1)-methylguanosine(37) in tRNA + S-adenosyl-L-homocysteine + H(+). Specifically methylates guanosine-37 in various tRNAs. The polypeptide is tRNA (guanine-N(1)-)-methyltransferase (Bartonella henselae (strain ATCC 49882 / DSM 28221 / CCUG 30454 / Houston 1) (Rochalimaea henselae)).